We begin with the raw amino-acid sequence, 266 residues long: CAAX prenyl protease 2 (266 aa).

3 helical membrane-spanning segments follow: residues 1–21, 42–59, and 78–98; these read MGAGLVSACLPISYVLLVHLF, LLSNFVSIVVTAFYLRDY, and ITYPFILMNAFYLGQFVMMQI. Catalysis depends on proton donor/acceptor residues Glu131 and His164. Transmembrane regions (helical) follow at residues 186 to 206, 210 to 230, and 239 to 259; these read GFQFCYTYLFGAFATWLQLTT, IVPIIAHAFCNAQGLPLWLEI, and RLTLYAAYSVGFAAFVHLLYT.

It belongs to the peptidase U48 family.

Its subcellular location is the endoplasmic reticulum membrane. It localises to the membrane. It carries out the reaction Hydrolyzes the peptide bond -P2-(S-farnesyl or geranylgeranyl)C-P1'-P2'-P3'-COOH where P1' and P2' are amino acids with aliphatic sidechains and P3' is any C-terminal residue.. In terms of biological role, protease involved in the processing of a variety of prenylated proteins containing the C-terminal CAAX motif, where C is a cysteine modified with an isoprenoid lipid, A is an aliphatic amino acid and X is any C-terminal amino acid. Proteolytically removes the C-terminal three residues of farnesylated and geranylated proteins, leaving the prenylated cysteine as the new C-terminus. The protein is CAAX prenyl protease 2 of Caenorhabditis elegans.